Consider the following 256-residue polypeptide: Enolase-phosphatase E1 (256 aa).

Mg(2+)-binding residues include Asp-14 and Glu-16. Substrate is bound by residues 142 to 143 and Lys-176; that span reads SS. Asp-201 provides a ligand contact to Mg(2+).

Belongs to the HAD-like hydrolase superfamily. MasA/MtnC family. Monomer. Requires Mg(2+) as cofactor.

It is found in the cytoplasm. The protein resides in the nucleus. The enzyme catalyses 5-methylsulfanyl-2,3-dioxopentyl phosphate + H2O = 1,2-dihydroxy-5-(methylsulfanyl)pent-1-en-3-one + phosphate. Its pathway is amino-acid biosynthesis; L-methionine biosynthesis via salvage pathway; L-methionine from S-methyl-5-thio-alpha-D-ribose 1-phosphate: step 3/6. The protein operates within amino-acid biosynthesis; L-methionine biosynthesis via salvage pathway; L-methionine from S-methyl-5-thio-alpha-D-ribose 1-phosphate: step 4/6. Functionally, bifunctional enzyme that catalyzes the enolization of 2,3-diketo-5-methylthiopentyl-1-phosphate (DK-MTP-1-P) into the intermediate 2-hydroxy-3-keto-5-methylthiopentenyl-1-phosphate (HK-MTPenyl-1-P), which is then dephosphorylated to form the acireductone 1,2-dihydroxy-3-keto-5-methylthiopentene (DHK-MTPene). In Drosophila sechellia (Fruit fly), this protein is Enolase-phosphatase E1.